The sequence spans 727 residues: Glucans biosynthesis glucosyltransferase H (727 aa).

The disordered stretch occupies residues 18-41 (SAMPNERPGAMEPQKLSKMPEGFP). 7 helical membrane-spanning segments follow: residues 58–78 (FLVV…MGAV), 97–117 (VNFC…LILL), 278–298 (LQQF…GWWV), 408–428 (IMAY…LMLA), 460–480 (LFYI…LLLL), 496–516 (IFSV…MMFI), and 572–592 (LLAW…ISAW).

The protein belongs to the glycosyltransferase 2 family. OpgH subfamily.

It localises to the cell inner membrane. Its pathway is glycan metabolism; osmoregulated periplasmic glucan (OPG) biosynthesis. Its function is as follows. Involved in the biosynthesis of osmoregulated periplasmic glucans (OPGs). In Shewanella baltica (strain OS155 / ATCC BAA-1091), this protein is Glucans biosynthesis glucosyltransferase H.